The chain runs to 379 residues: MRVDLFDFDLPDERIALRPAEPRDSARLLVVNPHAESRPHAESVPHAESRPHAESAFSDHRVGDLPSFLRAGDALVFNDTKVIPAQLEGIRHRDGAGGQQVSATLHMRVGPSRWKAFAKPGKRIKEGDRIAFGHSGESCLLGSLDATVEEKGEAGEVTLAFDLSGPALDEAIAAVGHIPLPPYIAAKRPEDERDRADYQTIYAREEGAVAAPTAGLHFTPALFEALDRAGIERHFVTLHVGAGTFLPVKADDTADHKMHLESGTVSAETAARLNAVKARGGRIVCVGTTSLRLIESAAEESGEIRGWSGATGIFITPGYRFKAVDMLMTNFHLPRSTLFMLVSAFSGFETMHAAYKHAISTGYRFYSYGDASLLFRKDK.

The tract at residues 35–58 (AESRPHAESVPHAESRPHAESAFS) is disordered.

Belongs to the QueA family. Monomer.

Its subcellular location is the cytoplasm. It carries out the reaction 7-aminomethyl-7-carbaguanosine(34) in tRNA + S-adenosyl-L-methionine = epoxyqueuosine(34) in tRNA + adenine + L-methionine + 2 H(+). It participates in tRNA modification; tRNA-queuosine biosynthesis. Functionally, transfers and isomerizes the ribose moiety from AdoMet to the 7-aminomethyl group of 7-deazaguanine (preQ1-tRNA) to give epoxyqueuosine (oQ-tRNA). The polypeptide is S-adenosylmethionine:tRNA ribosyltransferase-isomerase (Rhizobium leguminosarum bv. trifolii (strain WSM2304)).